We begin with the raw amino-acid sequence, 158 residues long: 2-C-methyl-D-erythritol 2,4-cyclodiphosphate synthase (158 aa).

A divalent metal cation is bound by residues Asp8 and His10. 4-CDP-2-C-methyl-D-erythritol 2-phosphate contacts are provided by residues 8 to 10 (DVH) and 34 to 35 (HS). Residue His42 participates in a divalent metal cation binding. Residues 56–58 (DIG), 61–65 (FPDTD), 100–106 (AQKPKML), 132–135 (TTEE), Phe139, and Lys142 each bind 4-CDP-2-C-methyl-D-erythritol 2-phosphate.

Belongs to the IspF family. Homotrimer. Requires a divalent metal cation as cofactor.

It carries out the reaction 4-CDP-2-C-methyl-D-erythritol 2-phosphate = 2-C-methyl-D-erythritol 2,4-cyclic diphosphate + CMP. It functions in the pathway isoprenoid biosynthesis; isopentenyl diphosphate biosynthesis via DXP pathway; isopentenyl diphosphate from 1-deoxy-D-xylulose 5-phosphate: step 4/6. In terms of biological role, involved in the biosynthesis of isopentenyl diphosphate (IPP) and dimethylallyl diphosphate (DMAPP), two major building blocks of isoprenoid compounds. Catalyzes the conversion of 4-diphosphocytidyl-2-C-methyl-D-erythritol 2-phosphate (CDP-ME2P) to 2-C-methyl-D-erythritol 2,4-cyclodiphosphate (ME-CPP) with a corresponding release of cytidine 5-monophosphate (CMP). The polypeptide is 2-C-methyl-D-erythritol 2,4-cyclodiphosphate synthase (Clostridium tetani (strain Massachusetts / E88)).